The sequence spans 323 residues: tRNA U34 carboxymethyltransferase (323 aa).

Carboxy-S-adenosyl-L-methionine contacts are provided by residues lysine 91, tryptophan 105, lysine 110, glycine 130, 152-154 (DPS), 181-182 (IE), methionine 196, tyrosine 200, and arginine 315.

The protein belongs to the class I-like SAM-binding methyltransferase superfamily. CmoB family. Homotetramer.

It carries out the reaction carboxy-S-adenosyl-L-methionine + 5-hydroxyuridine(34) in tRNA = 5-carboxymethoxyuridine(34) in tRNA + S-adenosyl-L-homocysteine + H(+). In terms of biological role, catalyzes carboxymethyl transfer from carboxy-S-adenosyl-L-methionine (Cx-SAM) to 5-hydroxyuridine (ho5U) to form 5-carboxymethoxyuridine (cmo5U) at position 34 in tRNAs. This chain is tRNA U34 carboxymethyltransferase, found in Vibrio vulnificus (strain CMCP6).